Reading from the N-terminus, the 261-residue chain is Precorrin-6A synthase [deacetylating] (261 aa).

The catalysed reaction is precorrin-5 + S-adenosyl-L-methionine + H2O = precorrin-6A + acetate + S-adenosyl-L-homocysteine + 2 H(+). The protein operates within cofactor biosynthesis; adenosylcobalamin biosynthesis; cob(II)yrinate a,c-diamide from precorrin-2 (aerobic route): step 5/10. In terms of biological role, catalyzes the methylation of C-1 in precorrin-5 and the subsequent extrusion of acetic acid from the resulting intermediate to form cobalt-precorrin-6A. This Sinorhizobium sp protein is Precorrin-6A synthase [deacetylating] (cobF).